A 527-amino-acid chain; its full sequence is Importin subunit alpha (527 aa).

An IBB domain is found at 1-58 (MSLRPNSRTEARRSRYKVAVDAEEGRRRREDNMVEIRKNKREENLLKKRREGLLQAQQ). ARM repeat units follow at residues 109 to 151 (IEEV…TSEN), 152 to 196 (TKVV…YRDL), 197 to 234 (VLGH…RGKP), 235 to 279 (QPLF…DKIQ), 280 to 319 (AVIE…DDIQ), 320 to 362 (TQVM…NRNQ), 363 to 403 (IQIV…GGNH), and 404 to 445 (DQIK…KIGE).

The protein belongs to the importin alpha family. In terms of assembly, forms a complex with importin subunit beta-1.

It localises to the cytoplasm. Its function is as follows. Binds specifically and directly to substrates containing either a simple or bipartite NLS motif. Promotes docking of import substrates to the nuclear envelope. Seems to act as a cytosolic receptor for both simple and bipartite NLS motifs. The protein is Importin subunit alpha of Solanum lycopersicum (Tomato).